The chain runs to 500 residues: Glycerol kinase (500 aa).

Thr13 is a binding site for ADP. ATP is bound by residues Thr13, Thr14, and Ser15. Thr13 is a binding site for sn-glycerol 3-phosphate. Arg17 provides a ligand contact to ADP. Positions 83, 84, 135, and 245 each coordinate sn-glycerol 3-phosphate. Positions 83, 84, 135, 245, and 246 each coordinate glycerol. ADP-binding residues include Thr267 and Gly310. Positions 267, 310, 314, and 411 each coordinate ATP. 2 residues coordinate ADP: Gly411 and Asn415.

This sequence belongs to the FGGY kinase family. Homotetramer and homodimer (in equilibrium).

It catalyses the reaction glycerol + ATP = sn-glycerol 3-phosphate + ADP + H(+). Its pathway is polyol metabolism; glycerol degradation via glycerol kinase pathway; sn-glycerol 3-phosphate from glycerol: step 1/1. Its activity is regulated as follows. Activated by phosphorylation and inhibited by fructose 1,6-bisphosphate (FBP). In terms of biological role, key enzyme in the regulation of glycerol uptake and metabolism. Catalyzes the phosphorylation of glycerol to yield sn-glycerol 3-phosphate. In Carboxydothermus hydrogenoformans (strain ATCC BAA-161 / DSM 6008 / Z-2901), this protein is Glycerol kinase.